A 185-amino-acid chain; its full sequence is Ribosome-recycling factor (185 aa).

Residues 127-158 (AVRNTRQDANNKVKKLEKDKEISEDESKKAQE) are disordered.

It belongs to the RRF family.

It is found in the cytoplasm. In terms of biological role, responsible for the release of ribosomes from messenger RNA at the termination of protein biosynthesis. May increase the efficiency of translation by recycling ribosomes from one round of translation to another. This chain is Ribosome-recycling factor, found in Helicobacter pylori (strain G27).